Consider the following 63-residue polypeptide: Large ribosomal subunit protein bL35 (63 aa).

This sequence belongs to the bacterial ribosomal protein bL35 family.

This is Large ribosomal subunit protein bL35 from Thermobifida fusca (strain YX).